The primary structure comprises 263 residues: 3-methyl-2-oxobutanoate hydroxymethyltransferase (263 aa).

Mg(2+) contacts are provided by Asp-45 and Asp-84. Residues 45–46 (DS), Asp-84, and Lys-112 each bind 3-methyl-2-oxobutanoate. A Mg(2+)-binding site is contributed by Glu-114. Residue Glu-181 is the Proton acceptor of the active site.

Belongs to the PanB family. In terms of assembly, homodecamer; pentamer of dimers. Requires Mg(2+) as cofactor.

Its subcellular location is the cytoplasm. The enzyme catalyses 3-methyl-2-oxobutanoate + (6R)-5,10-methylene-5,6,7,8-tetrahydrofolate + H2O = 2-dehydropantoate + (6S)-5,6,7,8-tetrahydrofolate. Its pathway is cofactor biosynthesis; (R)-pantothenate biosynthesis; (R)-pantoate from 3-methyl-2-oxobutanoate: step 1/2. Catalyzes the reversible reaction in which hydroxymethyl group from 5,10-methylenetetrahydrofolate is transferred onto alpha-ketoisovalerate to form ketopantoate. The protein is 3-methyl-2-oxobutanoate hydroxymethyltransferase of Chromohalobacter salexigens (strain ATCC BAA-138 / DSM 3043 / CIP 106854 / NCIMB 13768 / 1H11).